The following is a 133-amino-acid chain: Probable mitochondrial pyruvate carrier 2 (133 aa).

3 helical membrane-spanning segments follow: residues 39–55 (VTNL…IVPI), 73–91 (ASSL…TLIS), and 99–116 (MLAA…YNIY).

Belongs to the mitochondrial pyruvate carrier (MPC) (TC 2.A.105) family.

It is found in the mitochondrion inner membrane. Its function is as follows. May mediate the uptake of pyruvate into mitochondria. In Dictyostelium discoideum (Social amoeba), this protein is Probable mitochondrial pyruvate carrier 2.